Reading from the N-terminus, the 319-residue chain is 4-hydroxy-3-methylbut-2-enyl diphosphate reductase (319 aa).

C12 is a binding site for [4Fe-4S] cluster. Residues H41 and H74 each contribute to the (2E)-4-hydroxy-3-methylbut-2-enyl diphosphate site. Residues H41 and H74 each contribute to the dimethylallyl diphosphate site. 2 residues coordinate isopentenyl diphosphate: H41 and H74. C97 serves as a coordination point for [4Fe-4S] cluster. H125 is a (2E)-4-hydroxy-3-methylbut-2-enyl diphosphate binding site. Residue H125 coordinates dimethylallyl diphosphate. Position 125 (H125) interacts with isopentenyl diphosphate. E127 (proton donor) is an active-site residue. T168 is a (2E)-4-hydroxy-3-methylbut-2-enyl diphosphate binding site. C198 is a binding site for [4Fe-4S] cluster. S226, S227, N228, and S270 together coordinate (2E)-4-hydroxy-3-methylbut-2-enyl diphosphate. Dimethylallyl diphosphate is bound by residues S226, S227, N228, and S270. Isopentenyl diphosphate is bound by residues S226, S227, N228, and S270.

The protein belongs to the IspH family. As to quaternary structure, homodimer. Requires [4Fe-4S] cluster as cofactor.

It catalyses the reaction isopentenyl diphosphate + 2 oxidized [2Fe-2S]-[ferredoxin] + H2O = (2E)-4-hydroxy-3-methylbut-2-enyl diphosphate + 2 reduced [2Fe-2S]-[ferredoxin] + 2 H(+). It carries out the reaction dimethylallyl diphosphate + 2 oxidized [2Fe-2S]-[ferredoxin] + H2O = (2E)-4-hydroxy-3-methylbut-2-enyl diphosphate + 2 reduced [2Fe-2S]-[ferredoxin] + 2 H(+). It participates in isoprenoid biosynthesis; dimethylallyl diphosphate biosynthesis; dimethylallyl diphosphate from (2E)-4-hydroxy-3-methylbutenyl diphosphate: step 1/1. It functions in the pathway isoprenoid biosynthesis; isopentenyl diphosphate biosynthesis via DXP pathway; isopentenyl diphosphate from 1-deoxy-D-xylulose 5-phosphate: step 6/6. Catalyzes the conversion of 1-hydroxy-2-methyl-2-(E)-butenyl 4-diphosphate (HMBPP) into a mixture of isopentenyl diphosphate (IPP) and dimethylallyl diphosphate (DMAPP). Acts in the terminal step of the DOXP/MEP pathway for isoprenoid precursor biosynthesis. This chain is 4-hydroxy-3-methylbut-2-enyl diphosphate reductase, found in Hamiltonella defensa subsp. Acyrthosiphon pisum (strain 5AT).